A 183-amino-acid chain; its full sequence is tRNA-splicing endonuclease (183 aa).

Residues Y120, H128, and K159 contribute to the active site.

It belongs to the tRNA-intron endonuclease family. Archaeal short subfamily. As to quaternary structure, homotetramer; although the tetramer contains four active sites, only two participate in the cleavage. Therefore, it should be considered as a dimer of dimers.

It catalyses the reaction pretRNA = a 3'-half-tRNA molecule with a 5'-OH end + a 5'-half-tRNA molecule with a 2',3'-cyclic phosphate end + an intron with a 2',3'-cyclic phosphate and a 5'-hydroxyl terminus.. Endonuclease that removes tRNA introns. Cleaves pre-tRNA at the 5'- and 3'-splice sites to release the intron. The products are an intron and two tRNA half-molecules bearing 2',3' cyclic phosphate and 5'-OH termini. Recognizes a pseudosymmetric substrate in which 2 bulged loops of 3 bases are separated by a stem of 4 bp. This chain is tRNA-splicing endonuclease, found in Pyrobaculum aerophilum (strain ATCC 51768 / DSM 7523 / JCM 9630 / CIP 104966 / NBRC 100827 / IM2).